Here is a 453-residue protein sequence, read N- to C-terminus: Presenilin-like protein At1g08700 (453 aa).

Topologically, residues 1–8 (MESSILDS) are cytoplasmic. Residues 9–29 (LGVEIIGVMAPVSICMFLVVL) traverse the membrane as a helical segment. At 30–68 (LTYSLSVTSDPQIRSAANLIYIENPSDSTTVKLEGSLAN) the chain is on the lumenal side. Residues 69-89 (AIVFVVLIAAVTFILVLLFYY) traverse the membrane as a helical segment. The Cytoplasmic portion of the chain corresponds to 90–103 (NFTNFLKHYMRFSA). A helical transmembrane segment spans residues 104–124 (FFVLGTMGGAIFLSIIQHFSI). At 125–132 (PVDSITCF) the chain is on the lumenal side. A helical membrane pass occupies residues 133–153 (ILLFNFTILGTLSVFAGGIPI). Over 154–159 (VLRQCY) the chain is Cytoplasmic. 2 consecutive transmembrane segments (helical) span residues 160 to 180 (MVVM…WTTW) and 181 to 201 (FILV…GGPL). Residue Asp190 is part of the active site. Residues 202-369 (KLLVELASSR…VVDISNRGIK (168 aa)) are Cytoplasmic-facing. Disordered regions lie at residues 226-248 (VSSG…GGGV) and 292-329 (IGNG…DRES). A compositionally biased stretch (low complexity) spans 227–240 (SSGNQRRNRGSSLR). At Ser296 the chain carries Phosphoserine. Polar residues predominate over residues 309–320 (PSASEHSTSVGT). The chain crosses the membrane as a helical span at residues 370–390 (LGLGDFIFYSVLVGRAAMYDL). The active site involves Asp374. Residues 391–392 (MT) lie on the Lumenal side of the membrane. Residues 393 to 413 (VYACYLAIISGLGCTLILLSV) form a helical membrane-spanning segment. Residues 414 to 417 (YNRA) are Cytoplasmic-facing. The helical intramembrane region spans 418-438 (LPALPISIMLGVVFYFLTRLL). A PAL motif is present at residues 419–421 (PAL). Over 439–453 (MEPFVVGVTTNLMMF) the chain is Cytoplasmic.

Belongs to the peptidase A22A family. In terms of assembly, homodimer. Probable component of the gamma-secretase complex, a complex composed of a presenilin homodimer, nicastrin, APH1 and PEN2.

Its subcellular location is the endoplasmic reticulum membrane. The protein localises to the golgi apparatus membrane. Probable subunit of the gamma-secretase complex, an endoprotease complex that catalyzes the intramembrane cleavage of integral membrane proteins such as Notch receptors. The protein is Presenilin-like protein At1g08700 of Arabidopsis thaliana (Mouse-ear cress).